A 491-amino-acid chain; its full sequence is uncharacterized protein (491 aa).

This is an uncharacterized protein from Schizosaccharomyces pombe (strain 972 / ATCC 24843) (Fission yeast).